Consider the following 399-residue polypeptide: 4-hydroxy-3-methylbut-2-enyl diphosphate reductase (399 aa).

[4Fe-4S] cluster is bound at residue C66. H96 provides a ligand contact to (2E)-4-hydroxy-3-methylbut-2-enyl diphosphate. H96 is a dimethylallyl diphosphate binding site. H96 is a binding site for isopentenyl diphosphate. Residue C157 coordinates [4Fe-4S] cluster. H185 provides a ligand contact to (2E)-4-hydroxy-3-methylbut-2-enyl diphosphate. Dimethylallyl diphosphate is bound at residue H185. Position 185 (H185) interacts with isopentenyl diphosphate. Residue E187 is the Proton donor of the active site. T250 provides a ligand contact to (2E)-4-hydroxy-3-methylbut-2-enyl diphosphate. C288 contributes to the [4Fe-4S] cluster binding site. (2E)-4-hydroxy-3-methylbut-2-enyl diphosphate-binding residues include S317, S318, N319, and S379. S317, S318, N319, and S379 together coordinate dimethylallyl diphosphate. The isopentenyl diphosphate site is built by S317, S318, N319, and S379.

It belongs to the IspH family. It depends on [4Fe-4S] cluster as a cofactor.

It catalyses the reaction isopentenyl diphosphate + 2 oxidized [2Fe-2S]-[ferredoxin] + H2O = (2E)-4-hydroxy-3-methylbut-2-enyl diphosphate + 2 reduced [2Fe-2S]-[ferredoxin] + 2 H(+). The catalysed reaction is dimethylallyl diphosphate + 2 oxidized [2Fe-2S]-[ferredoxin] + H2O = (2E)-4-hydroxy-3-methylbut-2-enyl diphosphate + 2 reduced [2Fe-2S]-[ferredoxin] + 2 H(+). It participates in isoprenoid biosynthesis; dimethylallyl diphosphate biosynthesis; dimethylallyl diphosphate from (2E)-4-hydroxy-3-methylbutenyl diphosphate: step 1/1. Its pathway is isoprenoid biosynthesis; isopentenyl diphosphate biosynthesis via DXP pathway; isopentenyl diphosphate from 1-deoxy-D-xylulose 5-phosphate: step 6/6. In terms of biological role, catalyzes the conversion of 1-hydroxy-2-methyl-2-(E)-butenyl 4-diphosphate (HMBPP) into a mixture of isopentenyl diphosphate (IPP) and dimethylallyl diphosphate (DMAPP). Acts in the terminal step of the DOXP/MEP pathway for isoprenoid precursor biosynthesis. This chain is 4-hydroxy-3-methylbut-2-enyl diphosphate reductase, found in Synechococcus sp. (strain WH7803).